The chain runs to 108 residues: MFSTRGVLLLLSLMAAVAAFGLFSRPAPITRDTIRPPRAKHGSLKLCPPGGASFLDAFNLICPMRRRRRSVSENYNDGGGSLLGRTMNMCCETGCEFTDIFAICNPFG.

Positions 1-19 (MFSTRGVLLLLSLMAAVAA) are cleaved as a signal peptide.

The protein belongs to the insulin family. In terms of tissue distribution, expressed in head neurons and the uterus.

It is found in the secreted. Its function is as follows. Involved in the regulation of the larval diapause. The chain is Insulin-like peptide 17 from Caenorhabditis elegans.